Consider the following 315-residue polypeptide: Zinc finger CCCH domain-containing protein 23 (315 aa).

The interval 1 to 21 (MMIGENKNRPHPTIHIPQWDQ) is disordered. 2 consecutive C3H1-type zinc fingers follow at residues 131–157 (YSGT…HGVF) and 165–189 (RYRT…HTTE).

The chain is Zinc finger CCCH domain-containing protein 23 from Arabidopsis thaliana (Mouse-ear cress).